A 392-amino-acid polypeptide reads, in one-letter code: MPLPLYLLAVAVCAMGTSEFMLAGLVPDIASDLGVTVGTAGTLTSAFATGMIVGAPLVAALARTWPRRSSLLGFILAFAAAHAVGAGTTSFPVLVACRVVAALANAGFLAVALTTAAALVPADKQGRALAVLLSGTTVATVAGVPGGSLLGTWLGWRATFWAVAVCCLPAAFGVLKAIPAGRATAAATGGPPLRVELAALKTPRLLLAMLLGALVNAATFASFTFLAPVVTDTAGLGDLWISVALVLFGAGSFAGVTVAGRLSDRRPAQVLAVAGPLLLVGWPALAMLADRPVALLTLVFVQGALSFALGSTLITRVLYEAAGAPTMAGSYATAALNVGAAAGPLVAATTLGHTTGNLGPLWASGLLVAVALLVAFPFRTVITTAAPADATR.

Transmembrane regions (helical) follow at residues 6-26, 42-62, 71-91, 100-120, 129-149, 160-180, 205-225, 239-259, 268-288, 294-314, 332-352, and 358-378; these read YLLA…AGLV, TLTS…AALA, LLGF…TTSF, VAAL…AALV, LAVL…GGSL, FWAV…AIPA, LLLA…SFTF, LWIS…VTVA, AQVL…LAML, ALLT…STLI, ATAA…TTLG, and LGPL…AFPF.

This sequence belongs to the major facilitator superfamily.

It is found in the cell membrane. The sequence is that of Chloramphenicol resistance protein (cmlR) from Streptomyces lividans.